The following is a 567-amino-acid chain: R-linalool synthase QH1, chloroplastic (567 aa).

A chloroplast-targeting transit peptide spans 1–24 (GNAYMRIYSTKTTRITANATVNAA). Residues Arg282, Asp319, Asp323, Arg460, and Asp463 each coordinate (2E)-geranyl diphosphate. Asp319 and Asp323 together coordinate Mg(2+). The short motif at 319 to 323 (DDVYD) is the DDXXD motif element. The Mg(2+) site is built by Asp463, Thr467, and Glu471.

Belongs to the terpene synthase family. Tpsb subfamily. Mg(2+) serves as cofactor. As to expression, highly expressed in leaves and lower levels in inflorescences. Not detected in stems, stem epidermis, stem stele or roots.

The protein localises to the plastid. Its subcellular location is the chloroplast. It catalyses the reaction (2E)-geranyl diphosphate + H2O = (R)-linalool + diphosphate. Its pathway is secondary metabolite biosynthesis; terpenoid biosynthesis. Its function is as follows. Monoterpene synthase that catalyzes the formation of (3R)-linalool from geranyl diphosphate, but not from isopentenyl diphosphate, dimethylallyl diphosphate, chrysanthemyl diphosphate, farnesyl diphosphate, (+)-copalyl diphosphate or geranylgeranyl diphosphate. This is R-linalool synthase QH1, chloroplastic (QH1) from Artemisia annua (Sweet wormwood).